The sequence spans 255 residues: tRNA (guanine-N(1)-)-methyltransferase (255 aa).

Residues glycine 113 and 133–138 (IGDYVL) contribute to the S-adenosyl-L-methionine site.

It belongs to the RNA methyltransferase TrmD family. In terms of assembly, homodimer.

It localises to the cytoplasm. It carries out the reaction guanosine(37) in tRNA + S-adenosyl-L-methionine = N(1)-methylguanosine(37) in tRNA + S-adenosyl-L-homocysteine + H(+). Functionally, specifically methylates guanosine-37 in various tRNAs. In Klebsiella pneumoniae subsp. pneumoniae (strain ATCC 700721 / MGH 78578), this protein is tRNA (guanine-N(1)-)-methyltransferase.